The following is a 335-amino-acid chain: Putative type I specificity subunit S.MpnORF89P (335 aa).

Belongs to the type-I restriction system S methylase family. In terms of assembly, the methyltransferase is composed of M and S polypeptides.

The specificity (S) subunit of a type I methyltransferase (MTase); this subunit dictates DNA sequence specificity. The single R subunit has multiple frameshifts and is probably not expressed. The chain is Putative type I specificity subunit S.MpnORF89P from Mycoplasma pneumoniae (strain ATCC 29342 / M129 / Subtype 1) (Mycoplasmoides pneumoniae).